The following is a 459-amino-acid chain: Putrescine aminotransferase (459 aa).

Residues 150–151 (GT) and Gln-274 each bind pyridoxal 5'-phosphate. Lys-300 is modified (N6-(pyridoxal phosphate)lysine). Thr-332 serves as a coordination point for pyridoxal 5'-phosphate.

This sequence belongs to the class-III pyridoxal-phosphate-dependent aminotransferase family. Putrescine aminotransferase subfamily. The cofactor is pyridoxal 5'-phosphate.

It carries out the reaction an alkane-alpha,omega-diamine + 2-oxoglutarate = an omega-aminoaldehyde + L-glutamate. The enzyme catalyses putrescine + 2-oxoglutarate = 1-pyrroline + L-glutamate + H2O. The catalysed reaction is cadaverine + 2-oxoglutarate = 5-aminopentanal + L-glutamate. Its pathway is amine and polyamine degradation; putrescine degradation; 4-aminobutanal from putrescine (transaminase route): step 1/1. Its function is as follows. Catalyzes the aminotransferase reaction from putrescine to 2-oxoglutarate, leading to glutamate and 4-aminobutanal, which spontaneously cyclizes to form 1-pyrroline. This is the first step in one of two pathways for putrescine degradation, where putrescine is converted into 4-aminobutanoate (gamma-aminobutyrate or GABA) via 4-aminobutanal. Also functions as a cadaverine transaminase in a a L-lysine degradation pathway to succinate that proceeds via cadaverine, glutarate and L-2-hydroxyglutarate. The sequence is that of Putrescine aminotransferase from Salmonella heidelberg (strain SL476).